The following is a 592-amino-acid chain: Solute carrier family 13 member 2 (592 aa).

4 consecutive transmembrane segments (helical) span residues 13 to 33 (SYLI…LVPS), 53 to 73 (ALPL…MGIV), 86 to 106 (SNLL…WNLH), and 114 to 134 (LLIV…VTAF). Polar residues predominate over residues 165-177 (SSNVEEGSNNPTF). The segment at 165–185 (SSNVEEGSNNPTFELQEPSPQ) is disordered. Helical transmembrane passes span 221-241 (MSLC…TGTA), 274-294 (MVIL…GFNF), 324-344 (PMTF…LLWF), 371-391 (GTVA…FPGL), 450-470 (PLQS…VATF), 482-502 (IFLP…LYVM), 511-531 (LAFM…FGDL), and 545-565 (IIGV…LFSL).

It belongs to the SLC13A/DASS transporter (TC 2.A.47) family. NADC subfamily. In terms of tissue distribution, expressed in kidney and intestine. In kidney expressed in the proximal tubule (at protein level).

Its subcellular location is the apical cell membrane. The catalysed reaction is succinate(out) + 3 Na(+)(out) = succinate(in) + 3 Na(+)(in). It carries out the reaction fumarate(out) + 3 Na(+)(out) = fumarate(in) + 3 Na(+)(in). The enzyme catalyses 2-oxoglutarate(out) + 3 Na(+)(out) = 2-oxoglutarate(in) + 3 Na(+)(in). Li(+) decreases succinate transport in the presence of Na(+), by competing at one of the three cation binding sites. Functionally, low-affinity sodium-dicarboxylate cotransporter, that mediates the entry of citric acid cycle intermediates, such as succinate, citrate, fumarate and alpha-ketoglutarate (2-oxoglutarate) into the small intestine and renal proximal tubule. Transports the dicarboxylate into the cell with a probable stoichiometry of 3 Na(+) for 1 divalent dicarboxylate, rendering the process electrogenic. Citrate is transported in protonated form as a divalent anion, rather than the trivalent form which is normally found in blood. Has a critical role in renal dicarboxylate transport. The chain is Solute carrier family 13 member 2 (SLC13A2) from Homo sapiens (Human).